Reading from the N-terminus, the 286-residue chain is Bifunctional protein FolD 2 (286 aa).

NADP(+) contacts are provided by residues 165–167 (GRG), T192, and I233.

The protein belongs to the tetrahydrofolate dehydrogenase/cyclohydrolase family. As to quaternary structure, homodimer.

It catalyses the reaction (6R)-5,10-methylene-5,6,7,8-tetrahydrofolate + NADP(+) = (6R)-5,10-methenyltetrahydrofolate + NADPH. It carries out the reaction (6R)-5,10-methenyltetrahydrofolate + H2O = (6R)-10-formyltetrahydrofolate + H(+). It participates in one-carbon metabolism; tetrahydrofolate interconversion. Its function is as follows. Catalyzes the oxidation of 5,10-methylenetetrahydrofolate to 5,10-methenyltetrahydrofolate and then the hydrolysis of 5,10-methenyltetrahydrofolate to 10-formyltetrahydrofolate. The chain is Bifunctional protein FolD 2 from Salinispora arenicola (strain CNS-205).